A 432-amino-acid polypeptide reads, in one-letter code: Amino-acid acetyltransferase (432 aa).

The N-acetyltransferase domain occupies 286 to 432; the sequence is EVVREATIED…RNSKIFEKPL (147 aa).

It belongs to the acetyltransferase family. ArgA subfamily.

It is found in the cytoplasm. The catalysed reaction is L-glutamate + acetyl-CoA = N-acetyl-L-glutamate + CoA + H(+). The protein operates within amino-acid biosynthesis; L-arginine biosynthesis; N(2)-acetyl-L-ornithine from L-glutamate: step 1/4. This chain is Amino-acid acetyltransferase (argA), found in Pseudomonas putida (strain ATCC 47054 / DSM 6125 / CFBP 8728 / NCIMB 11950 / KT2440).